The following is a 220-amino-acid chain: Guanylate kinase (220 aa).

The region spanning 15 to 194 (GLMLVISSPS…AFEGIEAIVK (180 aa)) is the Guanylate kinase-like domain. 22–29 (SPSGAGKS) provides a ligand contact to ATP.

This sequence belongs to the guanylate kinase family.

It is found in the cytoplasm. It carries out the reaction GMP + ATP = GDP + ADP. In terms of biological role, essential for recycling GMP and indirectly, cGMP. The polypeptide is Guanylate kinase (Agrobacterium fabrum (strain C58 / ATCC 33970) (Agrobacterium tumefaciens (strain C58))).